The primary structure comprises 443 residues: Protoheme IX farnesyltransferase, mitochondrial (443 aa).

A run of 7 helical transmembrane segments spans residues 174 to 194, 235 to 255, 257 to 277, 280 to 300, 309 to 329, 364 to 384, and 411 to 431; these read AAGFALAPGPFDWPCFLLTSV, LAVSFATCCAVPGVAILTLGV, PLTGALGLFNIFLYTCCYTPL, ISIANTWVGAVVGAIPPVMGW, AGAFLLGGILYSWQFPHFNAL, LLVLSAAAPVLDITTWTFPIM, and LFFCSLWHLPLLLLLMLTCKR.

This sequence belongs to the UbiA prenyltransferase family.

Its subcellular location is the mitochondrion membrane. It carries out the reaction heme b + (2E,6E)-farnesyl diphosphate + H2O = Fe(II)-heme o + diphosphate. In terms of biological role, converts protoheme IX and farnesyl diphosphate to heme O. This Homo sapiens (Human) protein is Protoheme IX farnesyltransferase, mitochondrial (COX10).